A 757-amino-acid polypeptide reads, in one-letter code: MADSSFSLPPLCERISYTNYFLRAVYLTVLGLFFSLLLHRIRHTSEYDNVWLVAFFCESCFFLVCLLITCLKWSPADTKPFPDRLDERVHDLPSVDMFVPTADPVREPPIMVVDTVLSLLAVNYPANKLACYVSDDGCSPLTYFSLKEASKFAKIWVPFCKKYNTRVRAPSRYFLKPISVATEDYEFNRDWEKTKREYEKLRRKVEDATGDSHMLDVEDDFEAFSNTKPNDHSTLVKVVWENKGGVGDEKEIPHIIYISREKRPNYVHNQKCGAMNFLARVSGLMTNAPYILNVDCDMYANDADVVRQAMCILLQESLNMKHCAFVQFRQEFYDSSTELIVVLQSHLGRGIAGIQGPIYIGSGCVHTRRVMYGLSPDDFEVDGSLSSVATREFLVKDSLARRFGNSKEMMKSVVDAIQRNPNPQNILTNSIEAAREVGHCQYEYQTSWGNTIGWLYDSVAEDLNTSIGIHSRGWTSSYISPDTPAFLGSMPAGVPEALLQQRRWATGWIEILFNKQSPLRGLFSKKIRFRQRLAYLCIITCLRSIPELIYCLLPAYCLLHNSTLFPKGLYLGITVTLVGIHCLYTLWEFMSLGYSVQSWLVSQSVWRIVATSSWLFSIFDITLKLLGISETVFIITKKTVAGTKSALGSGPSQGEDVGPNSDLFKFEFDGSLCFLPGTFIVLVNIAALAVFSVGLQRSSYSHEGGGSGLAEACGCVLVMMLFLPFLMGLFKKGKYGTPLSTLSIAGFLAVLFVVFSV.

2 helical membrane passes run 18–38 (TNYF…SLLL) and 50–70 (VWLV…LITC). Residue Asp136 is part of the active site. Positions 186 to 216 (EFNRDWEKTKREYEKLRRKVEDATGDSHMLD) form a coiled coil. Asp462 is a catalytic residue. Helical transmembrane passes span 533-553 (LAYL…YCLL), 569-589 (LYLG…LWEF), 615-635 (LFSI…VFII), 674-694 (FLPG…FSVG), 710-730 (AEAC…MGLF), and 737-757 (TPLS…VFSV).

This sequence belongs to the glycosyltransferase 2 family. Plant cellulose synthase-like B subfamily. Expressed in young seedlings, primarily in the vascular tissue.

Its subcellular location is the golgi apparatus membrane. Functionally, thought to be a Golgi-localized beta-glycan synthase that polymerize the backbones of noncellulosic polysaccharides (hemicelluloses) of plant cell wall. In Arabidopsis thaliana (Mouse-ear cress), this protein is Cellulose synthase-like protein B1 (CSLB1).